Consider the following 738-residue polypeptide: 1,4-alpha-glucan branching enzyme GlgB (738 aa).

D417 serves as the catalytic Nucleophile. The Proton donor role is filled by E472.

This sequence belongs to the glycosyl hydrolase 13 family. GlgB subfamily. In terms of assembly, monomer.

The enzyme catalyses Transfers a segment of a (1-&gt;4)-alpha-D-glucan chain to a primary hydroxy group in a similar glucan chain.. It functions in the pathway glycan biosynthesis; glycogen biosynthesis. Catalyzes the formation of the alpha-1,6-glucosidic linkages in glycogen by scission of a 1,4-alpha-linked oligosaccharide from growing alpha-1,4-glucan chains and the subsequent attachment of the oligosaccharide to the alpha-1,6 position. The polypeptide is 1,4-alpha-glucan branching enzyme GlgB (Burkholderia pseudomallei (strain 668)).